The primary structure comprises 193 residues: uncharacterized protein (193 aa).

A disordered region spans residues 55 to 94 (PVGGAAGARSLSQALPAPAPPPPPPPGLGPSSERPWPSPW). Pro residues predominate over residues 71–82 (APAPPPPPPPGL).

This is an uncharacterized protein from Homo sapiens (Human).